We begin with the raw amino-acid sequence, 255 residues long: Methionine aminopeptidase (255 aa).

His-76 serves as a coordination point for substrate. Asp-93, Asp-104, and His-167 together coordinate a divalent metal cation. A substrate-binding site is contributed by His-174. 2 residues coordinate a divalent metal cation: Glu-201 and Glu-232.

It belongs to the peptidase M24A family. Methionine aminopeptidase type 1 subfamily. As to quaternary structure, monomer. Requires Co(2+) as cofactor. Zn(2+) serves as cofactor. It depends on Mn(2+) as a cofactor. The cofactor is Fe(2+).

It carries out the reaction Release of N-terminal amino acids, preferentially methionine, from peptides and arylamides.. Functionally, removes the N-terminal methionine from nascent proteins. The N-terminal methionine is often cleaved when the second residue in the primary sequence is small and uncharged (Met-Ala-, Cys, Gly, Pro, Ser, Thr, or Val). Requires deformylation of the N(alpha)-formylated initiator methionine before it can be hydrolyzed. The protein is Methionine aminopeptidase of Treponema pallidum (strain Nichols).